Reading from the N-terminus, the 321-residue chain is NADPH-dependent codeinone reductase 1-2 (321 aa).

Positions 27 and 51 each coordinate NADPH. Active-site proton donor residues include Tyr-56 and His-119. His-119 contributes to the substrate binding site. 6 residues coordinate NADPH: Ser-165, Gln-187, Ser-214, Leu-216, Ser-264, and Arg-269. The interval Ser-299–Asp-321 is disordered.

It belongs to the aldo/keto reductase family. In terms of tissue distribution, latex secreting cells (laticifer cells). Expressed constitutively in all organs with highest levels in capsules. Restricted to the parietal region of sieve elements adjacent or proximal to laticifers in roots, stems, leaves and carpels.

The protein resides in the cytoplasm. It is found in the cytosol. It catalyses the reaction codeine + NADP(+) = codeinone + NADPH + H(+). The catalysed reaction is neopine + NADP(+) = neopinone + NADPH + H(+). It carries out the reaction morphine + NADP(+) = morphinone + NADPH + H(+). The enzyme catalyses neomorphine + NADP(+) = neomorphinone + NADPH + H(+). Its pathway is alkaloid biosynthesis; morphine biosynthesis. Functionally, NADPH-dependent codeinone reductase involved in biosynthesis of morphinan-type benzylisoquinoline and opiate alkaloids natural products. Reduces codeinone to codeine in the penultimate step in morphine biosynthesis. Can use morphinone, hydrocodone and hydromorphone as substrate during reductive reaction with NADPH as cofactor, and morphine and dihydrocodeine as substrate during oxidative reaction with NADP as cofactor. Converts morphinone to morphine, and neomorphinone to neomorphine. Reduces irreversibly neopinone, a spontaneous isomer of codeinone, to neopine; in planta, neopine levels are limited to low levels. The polypeptide is NADPH-dependent codeinone reductase 1-2 (Papaver somniferum (Opium poppy)).